The sequence spans 197 residues: Nucleoside triphosphate pyrophosphatase (197 aa).

The Proton acceptor role is filled by Asp-72.

This sequence belongs to the Maf family. It depends on a divalent metal cation as a cofactor.

The protein localises to the cytoplasm. The enzyme catalyses a ribonucleoside 5'-triphosphate + H2O = a ribonucleoside 5'-phosphate + diphosphate + H(+). It carries out the reaction a 2'-deoxyribonucleoside 5'-triphosphate + H2O = a 2'-deoxyribonucleoside 5'-phosphate + diphosphate + H(+). Nucleoside triphosphate pyrophosphatase. May have a dual role in cell division arrest and in preventing the incorporation of modified nucleotides into cellular nucleic acids. In Corynebacterium efficiens (strain DSM 44549 / YS-314 / AJ 12310 / JCM 11189 / NBRC 100395), this protein is Nucleoside triphosphate pyrophosphatase.